We begin with the raw amino-acid sequence, 525 residues long: MCGILAVLGCSDDSQAKRVRVLELSRRLKHRGPDWSGLDHHGDCYLAHQRLAIIDPASGDQPLYNEDKTIIVTVNGEIYNHEELRKGLPGHTFRTGSDCEVIAHLYEEHGESFIHMLDGIFSFVLLDSRNNSFVAARDAIGVTPLYIGWGLDGSVWISSEMKGLNDDCEHFKFFPPGHLYSSKEGSFKRWYNPPWFSEVIPSVPFDPLALRKAFEDAVIKRLMTDVPFGVLLSGGLDSSLVASVTARYLEGTKAAELWGTQLHSFCVGLEGSPDLKAAKEVANFLGTIHHEFHFTVQDGIDAIEDVIYHVETYDVTTIRASTPMFLMSRKIKSLGVKMVISGEGSDEIFGGYLYFHKAPNKEELHLETCHKIKALHQYDCLRANKATSAWGLEARVPFLDKEFVNVAMSIDPEWKMIKPDIGRIEKWILRRAFDDEENPYLPKHILYRQKEQFSDGVGYSWIDGLKAHSALHVTDKMMLNAAHIYPHNTPTTKEAYYYRMIFERFFPQIDSPWRSKCGLQHSKSY.

Cysteine 2 functions as the For GATase activity in the catalytic mechanism. In terms of domain architecture, Glutamine amidotransferase type-2 spans 2-185 (CGILAVLGCS…PGHLYSSKEG (184 aa)). L-glutamine is bound by residues 50-54 (RLAII), 75-77 (NGE), and aspartate 98. The Asparagine synthetase domain occupies 193 to 517 (PPWFSEVIPS…QIDSPWRSKC (325 aa)). Residues leucine 231, valine 267, and 341-342 (SG) each bind ATP.

It catalyses the reaction L-aspartate + L-glutamine + ATP + H2O = L-asparagine + L-glutamate + AMP + diphosphate + H(+). Its pathway is amino-acid biosynthesis; L-asparagine biosynthesis; L-asparagine from L-aspartate (L-Gln route): step 1/1. In terms of biological role, could play a role in remobilization of nitrogen in flowers during senescence. This chain is Asparagine synthetase [glutamine-hydrolyzing] (AND1), found in Sandersonia aurantiaca (Christmas-bells).